The following is a 298-amino-acid chain: Cytidine deaminase (298 aa).

2 consecutive CMP/dCMP-type deaminase domains span residues 47–167 (TEQQ…FGPS) and 186–298 (DSDD…PLLG). 88-90 (NLE) lines the substrate pocket. His-101 provides a ligand contact to Zn(2+). Glu-103 serves as the catalytic Proton donor. Positions 128 and 131 each coordinate Zn(2+).

The protein belongs to the cytidine and deoxycytidylate deaminase family. Homodimer. Zn(2+) is required as a cofactor.

The enzyme catalyses cytidine + H2O + H(+) = uridine + NH4(+). The catalysed reaction is 2'-deoxycytidine + H2O + H(+) = 2'-deoxyuridine + NH4(+). In terms of biological role, this enzyme scavenges exogenous and endogenous cytidine and 2'-deoxycytidine for UMP synthesis. In Shewanella frigidimarina (strain NCIMB 400), this protein is Cytidine deaminase.